A 506-amino-acid chain; its full sequence is FAD-linked oxidoreductase aurO (506 aa).

The region spanning 92–260 (ITAQPLAICR…AETDVRVYPM (169 aa)) is the FAD-binding PCMH-type domain.

This sequence belongs to the oxygen-dependent FAD-linked oxidoreductase family. As to quaternary structure, might be part of an extracellular enzyme complex composed of GIP1, aurF, aurO and aurS. Requires FAD as cofactor.

The protein resides in the secreted. It is found in the extracellular space. It participates in pigment biosynthesis. FAD-linked oxidoreductase; part of the gene cluster that mediates the biosynthesis of aurofusarin, a red mycelium pigment which is acting as a mycotoxin. The first step is performed by the polyketide synthase which condenses one acetyl-CoA and 6 malonyl-CoA units to form the first intermediate, the cyclic heptaketide and yellow pigment YWA1. The C2 hydroxyl group in the pyrone ring of YWA1 is probably formed during ring closure by an aldol-type cyclization reaction. The dehydratase aurZ then acts as the first tailoring enzyme in the aurofusarin biosynthetic pathway by converting YWA1 to nor-rubrofusarin. Nor-rubrofusarin is then methylated to rubrofusarin by the O-methyltransferase aurJ. Rubrofusarin is then transported across the plasma membrane by the rubrofusarin-specific pump aurT for further enzymatic processing by the extracellular complex composed of GIP1, aurF, aurO and aurS to yield aurofusarin. The chain is FAD-linked oxidoreductase aurO from Gibberella zeae (strain ATCC MYA-4620 / CBS 123657 / FGSC 9075 / NRRL 31084 / PH-1) (Wheat head blight fungus).